Here is a 70-residue protein sequence, read N- to C-terminus: Homeobox protein OTX2 (70 aa).

The segment at H34–S70 is disordered. Over residues P45–S70 the composition is skewed to polar residues.

This sequence belongs to the paired homeobox family. Bicoid subfamily.

Its subcellular location is the nucleus. Its function is as follows. Transcription factor probably involved in the development of the brain and the sense organs. Can bind to the bicoid/BCD target sequence (BTS): 5'-TCTAATCCC-3'. The polypeptide is Homeobox protein OTX2 (Otx2) (Rattus norvegicus (Rat)).